Reading from the N-terminus, the 368-residue chain is Chorismate synthase (368 aa).

The NADP(+) site is built by Arg48 and Arg54. FMN contacts are provided by residues 131–133, 243–244, Gly292, 307–311, and Arg333; these read RSS, NA, and KPTSS.

It belongs to the chorismate synthase family. In terms of assembly, homotetramer. The cofactor is FMNH2.

It carries out the reaction 5-O-(1-carboxyvinyl)-3-phosphoshikimate = chorismate + phosphate. The protein operates within metabolic intermediate biosynthesis; chorismate biosynthesis; chorismate from D-erythrose 4-phosphate and phosphoenolpyruvate: step 7/7. In terms of biological role, catalyzes the anti-1,4-elimination of the C-3 phosphate and the C-6 proR hydrogen from 5-enolpyruvylshikimate-3-phosphate (EPSP) to yield chorismate, which is the branch point compound that serves as the starting substrate for the three terminal pathways of aromatic amino acid biosynthesis. This reaction introduces a second double bond into the aromatic ring system. In Nitrobacter winogradskyi (strain ATCC 25391 / DSM 10237 / CIP 104748 / NCIMB 11846 / Nb-255), this protein is Chorismate synthase.